A 423-amino-acid chain; its full sequence is Kynureninase (423 aa).

Residues L105, S106, 133–136 (FPSD), D218, H221, and Y243 contribute to the pyridoxal 5'-phosphate site. N6-(pyridoxal phosphate)lysine is present on K244. Positions 273 and 301 each coordinate pyridoxal 5'-phosphate.

It belongs to the kynureninase family. In terms of assembly, homodimer. Requires pyridoxal 5'-phosphate as cofactor.

It catalyses the reaction L-kynurenine + H2O = anthranilate + L-alanine + H(+). It carries out the reaction 3-hydroxy-L-kynurenine + H2O = 3-hydroxyanthranilate + L-alanine + H(+). The protein operates within amino-acid degradation; L-kynurenine degradation; L-alanine and anthranilate from L-kynurenine: step 1/1. It participates in cofactor biosynthesis; NAD(+) biosynthesis; quinolinate from L-kynurenine: step 2/3. Its function is as follows. Catalyzes the cleavage of L-kynurenine (L-Kyn) and L-3-hydroxykynurenine (L-3OHKyn) into anthranilic acid (AA) and 3-hydroxyanthranilic acid (3-OHAA), respectively. The protein is Kynureninase of Xanthomonas oryzae pv. oryzae (strain KACC10331 / KXO85).